The following is a 381-amino-acid chain: Ceropsin (381 aa).

The Extracellular portion of the chain corresponds to 1 to 62; the sequence is MSISMDAGPG…MNPLWHALLG (62 aa). Asparagine 28 carries N-linked (GlcNAc...) asparagine glycosylation. The chain crosses the membrane as a helical span at residues 63-83; the sequence is FTIGVLGFISMMGNGMVIYIF. At 84–96 the chain is on the cytoplasmic side; the sequence is MTTKNLKTPSNLL. The helical transmembrane segment at 97-117 threads the bilayer; the sequence is VVNLAFSDFLMMCAMSPAMVI. The Extracellular segment spans residues 118-133; that stretch reads NCYNETWVFGPFACEL. An N-linked (GlcNAc...) asparagine glycan is attached at asparagine 121. The cysteines at positions 131 and 208 are disulfide-linked. Residues 134–154 traverse the membrane as a helical segment; it reads YGCAGSLFGCASIWTMTMIAF. Over 155–173 the chain is Cytoplasmic; that stretch reads DRYNVIVKGIAAKPMTNNG. A helical membrane pass occupies residues 174–194; sequence ALLRILGIWAFSLAWTVAPFF. Topologically, residues 195-221 are extracellular; it reads GWNRYVPEGNMTACGTDYLTKDWFSRS. Residue asparagine 204 is glycosylated (N-linked (GlcNAc...) asparagine). A helical transmembrane segment spans residues 222–242; it reads YIVVYSVFVYFAPLLLIVYSY. The Cytoplasmic segment spans residues 243 to 284; sequence YYIVQAVSAHEKAMREQAKKMNVASLRSSEAANTSTECKLAK. A helical membrane pass occupies residues 285–305; it reads VALMTISLWFMAWTPYLVINY. Topologically, residues 306–316 are extracellular; that stretch reads TGILESAPISP. The helical transmembrane segment at 317–339 threads the bilayer; sequence LATIWGSLFAKANAVYNPIVYGI. Topologically, residues 340 to 381 are cytoplasmic; it reads SHPKYQAALYKRFPVLQCHSTTTDEASSVASGTTVMEEKPTA.

This sequence belongs to the G-protein coupled receptor 1 family. Opsin subfamily. Expressed bilaterally in dorsal and ventral anterior protocerebral cells and bilaterally in the dorsal posterior protocerebral and lateral posterior tritocerebral cells (at protein level). Expressed in the larval brain but not in the subesophageal ganglion or thoracic ganglion.

The protein localises to the membrane. In terms of biological role, visual pigments are the light-absorbing molecules that mediate vision. They consist of an apoprotein, opsin, covalently linked to cis-retinal. May play a role in photoperiodic photoreception. The protein is Ceropsin of Bombyx mori (Silk moth).